The sequence spans 826 residues: DNA mismatch repair protein MutS (826 aa).

Position 622–629 (622–629) interacts with ATP; the sequence is GPNMAGKS.

This sequence belongs to the DNA mismatch repair MutS family.

In terms of biological role, this protein is involved in the repair of mismatches in DNA. It is possible that it carries out the mismatch recognition step. This protein has a weak ATPase activity. In Chlamydia abortus (strain DSM 27085 / S26/3) (Chlamydophila abortus), this protein is DNA mismatch repair protein MutS.